A 157-amino-acid polypeptide reads, in one-letter code: S-ribosylhomocysteine lyase 2 (157 aa).

The Fe cation site is built by histidine 54, histidine 58, and cysteine 124.

This sequence belongs to the LuxS family. In terms of assembly, homodimer. The cofactor is Fe cation.

The enzyme catalyses S-(5-deoxy-D-ribos-5-yl)-L-homocysteine = (S)-4,5-dihydroxypentane-2,3-dione + L-homocysteine. In terms of biological role, involved in the synthesis of autoinducer 2 (AI-2) which is secreted by bacteria and is used to communicate both the cell density and the metabolic potential of the environment. The regulation of gene expression in response to changes in cell density is called quorum sensing. Catalyzes the transformation of S-ribosylhomocysteine (RHC) to homocysteine (HC) and 4,5-dihydroxy-2,3-pentadione (DPD). In Lactobacillus delbrueckii subsp. bulgaricus (strain ATCC BAA-365 / Lb-18), this protein is S-ribosylhomocysteine lyase 2.